The following is a 226-amino-acid chain: ATP synthase subunit C lysine N-methyltransferase (226 aa).

The helical transmembrane segment at 35–55 (VIGGTLVALYAVATPFVAPAL) threads the bilayer. The required for mitochondrial location stretch occupies residues 48–82 (TPFVAPALRKLCLPYVPATTTQVKNVLKMLRSRTG).

It belongs to the ANT/ATPSC lysine N-methyltransferase family.

The protein resides in the mitochondrion membrane. Its function is as follows. Mitochondrial protein-lysine N-methyltransferase that promotes chronic pain. Involved in persistent inflammatory and neuropathic pain: methyltransferase activity in the mitochondria of sensory neurons promotes chronic pain via a pathway that depends on the production of reactive oxygen species (ROS) and on the engagement of spinal cord microglia. Protein-lysine N-methyltransferase activity is dependent on S-adenosyl-L-methionine. This is ATP synthase subunit C lysine N-methyltransferase (atpsckmt) from Xenopus laevis (African clawed frog).